A 1157-amino-acid polypeptide reads, in one-letter code: Hephaestin (1157 aa).

The N-terminal stretch at 1–23 (MKAGHLLWALLLMHSLCSLPTDG) is a signal peptide. 6 Plastocyanin-like domains span residues 24–206 (AIRN…LITC), 218–366 (QRKD…VDSC), 370–559 (PPVE…LLVC), 569–717 (KQKG…VSQC), 730–902 (ASRV…LVIC), and 910–1066 (NGGR…SHEE). Over 24–1109 (AIRNYYLGIQ…PVKNVEILSS (1086 aa)) the chain is Extracellular. 2 N-linked (GlcNAc...) asparagine glycosylation sites follow: asparagine 49 and asparagine 54. Na(+)-binding residues include glycine 70 and tyrosine 73. Cu(2+)-binding residues include histidine 126 and histidine 128. Histidine 126 serves as a coordination point for O2. The Ca(2+) site is built by lysine 134, aspartate 152, and aspartate 153. N-linked (GlcNAc...) asparagine glycosylation occurs at asparagine 164. A disulfide bond links cysteine 180 and cysteine 206. Residues histidine 186 and histidine 188 each coordinate Cu(2+). Histidine 186 lines the O2 pocket. N-linked (GlcNAc...) asparagine glycosylation occurs at asparagine 236. Serine 265 contacts Na(+). A disulfide bond links cysteine 285 and cysteine 366. Residues histidine 304, cysteine 347, and histidine 352 each contribute to the Cu(2+) site. Tyrosine 416, glycine 425, and tyrosine 428 together coordinate Na(+). Cysteine 533 and cysteine 559 are joined by a disulfide. The N-linked (GlcNAc...) asparagine glycan is linked to asparagine 587. Serine 616 contributes to the Na(+) binding site. Cysteine 636 and cysteine 717 are disulfide-bonded. 4 residues coordinate Cu(2+): histidine 655, cysteine 698, histidine 703, and methionine 708. N-linked (GlcNAc...) asparagine glycans are attached at residues asparagine 713 and asparagine 757. Phenylalanine 768 and glycine 777 together coordinate Na(+). The cysteines at positions 876 and 902 are disulfide-linked. Residue asparagine 930 is glycosylated (N-linked (GlcNAc...) asparagine). Cu(2+) is bound by residues histidine 999, histidine 1002, histidine 1004, histidine 1044, cysteine 1045, histidine 1046, histidine 1050, and methionine 1055. Residues histidine 1002 and histidine 1004 each contribute to the O2 site. Residue histidine 1046 coordinates O2. Residues 1110–1130 (ALIAICVVLLLIALALGGVVW) traverse the membrane as a helical segment. Residues 1131–1157 (YQHRQRKLRRNRRSILDDSFKLLSLKQ) lie on the Cytoplasmic side of the membrane. Phosphoserine is present on residues serine 1144, serine 1149, and serine 1154.

The protein belongs to the multicopper oxidase family. In terms of assembly, part of a complex composed of SLC40A1/ferroportin, TF/transferrin and HEPH/hephaestin that transfers iron from cells to transferrin. Requires Cu cation as cofactor. As to expression, highly expressed in small intestine and colon.

The protein localises to the basolateral cell membrane. It carries out the reaction 4 Fe(2+) + O2 + 4 H(+) = 4 Fe(3+) + 2 H2O. Functionally, plasma membrane ferroxidase that mediates the extracellular conversion of ferrous/Fe(2+) iron into its ferric/Fe(3+) form. Couples ferroportin which specifically exports ferrous/Fe(2+) iron from cells to transferrin that only binds and shuttles extracellular ferric/Fe(3+) iron throughout the body. By helping iron transfer from cells to blood mainly contributes to dietary iron absorption by the intestinal epithelium and more generally regulates iron levels in the body. The protein is Hephaestin of Rattus norvegicus (Rat).